Here is a 170-residue protein sequence, read N- to C-terminus: IMPACT family member YDL177C (170 aa).

Positions 79–98 (KKKGNKANKSNNSHVNKSRN) are disordered.

This sequence belongs to the IMPACT family.

The sequence is that of IMPACT family member YDL177C from Saccharomyces cerevisiae (strain ATCC 204508 / S288c) (Baker's yeast).